An 85-amino-acid polypeptide reads, in one-letter code: Small ribosomal subunit protein uS17 (85 aa).

Belongs to the universal ribosomal protein uS17 family. Part of the 30S ribosomal subunit.

One of the primary rRNA binding proteins, it binds specifically to the 5'-end of 16S ribosomal RNA. The polypeptide is Small ribosomal subunit protein uS17 (Pseudoalteromonas translucida (strain TAC 125)).